A 205-amino-acid polypeptide reads, in one-letter code: Ribosomal RNA small subunit methyltransferase G (205 aa).

S-adenosyl-L-methionine contacts are provided by residues glycine 66, phenylalanine 71, 119–120 (IE), and arginine 135.

The protein belongs to the methyltransferase superfamily. RNA methyltransferase RsmG family.

It localises to the cytoplasm. The enzyme catalyses guanosine(527) in 16S rRNA + S-adenosyl-L-methionine = N(7)-methylguanosine(527) in 16S rRNA + S-adenosyl-L-homocysteine. In terms of biological role, specifically methylates the N7 position of guanine in position 527 of 16S rRNA. The polypeptide is Ribosomal RNA small subunit methyltransferase G (Rhizobium rhizogenes (strain K84 / ATCC BAA-868) (Agrobacterium radiobacter)).